The chain runs to 698 residues: DNA ligase (698 aa).

NAD(+)-binding positions include 40 to 44 (DGEYD), 89 to 90 (SL), and Glu123. The active-site N6-AMP-lysine intermediate is the Lys125. Positions 146, 184, 300, and 324 each coordinate NAD(+). Zn(2+) contacts are provided by Cys418, Cys421, Cys436, and Cys442. The region spanning 620–698 (AGDSPLAGKT…EAEFRAMSGG (79 aa)) is the BRCT domain.

The protein belongs to the NAD-dependent DNA ligase family. LigA subfamily. Mg(2+) serves as cofactor. Mn(2+) is required as a cofactor.

The enzyme catalyses NAD(+) + (deoxyribonucleotide)n-3'-hydroxyl + 5'-phospho-(deoxyribonucleotide)m = (deoxyribonucleotide)n+m + AMP + beta-nicotinamide D-nucleotide.. Functionally, DNA ligase that catalyzes the formation of phosphodiester linkages between 5'-phosphoryl and 3'-hydroxyl groups in double-stranded DNA using NAD as a coenzyme and as the energy source for the reaction. It is essential for DNA replication and repair of damaged DNA. This chain is DNA ligase, found in Rhodospirillum rubrum (strain ATCC 11170 / ATH 1.1.1 / DSM 467 / LMG 4362 / NCIMB 8255 / S1).